Reading from the N-terminus, the 171-residue chain is Vimentin-type intermediate filament-associated coiled-coil protein (171 aa).

Residues 7-98 (LQIREANAHL…QRDQMIQELQ (92 aa)) adopt a coiled-coil conformation. A disordered region spans residues 126 to 171 (ELGPLPSSHSHGAQLLPDGPGPPLGNSMREEEGQDDQQPAVFGTTV).

In terms of tissue distribution, expressed in brain, heart, kidney, liver, lung, skeletal muscle, spleen and testis. Within the kidney expression is pronounced within glomeruli.

It is found in the cytoplasm. In Rattus norvegicus (Rat), this protein is Vimentin-type intermediate filament-associated coiled-coil protein (Vmac).